The following is a 345-amino-acid chain: UDP-3-O-acylglucosamine N-acyltransferase (345 aa).

His241 acts as the Proton acceptor in catalysis.

It belongs to the transferase hexapeptide repeat family. LpxD subfamily. As to quaternary structure, homotrimer.

The enzyme catalyses a UDP-3-O-[(3R)-3-hydroxyacyl]-alpha-D-glucosamine + a (3R)-hydroxyacyl-[ACP] = a UDP-2-N,3-O-bis[(3R)-3-hydroxyacyl]-alpha-D-glucosamine + holo-[ACP] + H(+). Its pathway is bacterial outer membrane biogenesis; LPS lipid A biosynthesis. Functionally, catalyzes the N-acylation of UDP-3-O-acylglucosamine using 3-hydroxyacyl-ACP as the acyl donor. Is involved in the biosynthesis of lipid A, a phosphorylated glycolipid that anchors the lipopolysaccharide to the outer membrane of the cell. The chain is UDP-3-O-acylglucosamine N-acyltransferase from Desulfotalea psychrophila (strain LSv54 / DSM 12343).